Here is a 120-residue protein sequence, read N- to C-terminus: T-cell receptor beta chain V region PHDS203 (120 aa).

Residues 1–11 form the signal peptide; it reads VVLCFLGTGLV. Residues 12-106 are v segment; the sequence is DMKVTQMSRY…TSVYFCAQGA (95 aa). Residues Cys34 and Cys102 are joined by a disulfide bond. Residues 107-120 are j segment; that stretch reads PEQYFGPGTRLTVL.

The sequence is that of T-cell receptor beta chain V region PHDS203 from Mus musculus (Mouse).